Consider the following 268-residue polypeptide: Undecaprenyl-diphosphatase (268 aa).

The next 7 membrane-spanning stretches (helical) occupy residues 47–67, 85–105, 109–129, 144–164, 184–204, 217–237, and 246–266; these read FAVL…FSKL, IGVL…GGLI, LFNP…LLWV, FPLP…FPGV, AAEF…VYDL, LIVA…VKTF, and FALF…ALAL.

It belongs to the UppP family.

Its subcellular location is the cell inner membrane. It carries out the reaction di-trans,octa-cis-undecaprenyl diphosphate + H2O = di-trans,octa-cis-undecaprenyl phosphate + phosphate + H(+). Its function is as follows. Catalyzes the dephosphorylation of undecaprenyl diphosphate (UPP). Confers resistance to bacitracin. This is Undecaprenyl-diphosphatase from Rhodopseudomonas palustris (strain BisA53).